We begin with the raw amino-acid sequence, 190 residues long: RING finger protein 227 (190 aa).

The RING-type zinc-finger motif lies at 18 to 81 (CNICYRPFNL…RRVVTCPFCR (64 aa)). The disordered stretch occupies residues 111-145 (KCERDEAGNPAKESSDADGEAEEEGESEKGAGPRS). Residues 126-136 (DADGEAEEEGE) are compositionally biased toward acidic residues.

The chain is RING finger protein 227 from Homo sapiens (Human).